Consider the following 256-residue polypeptide: Hemolymph lipopolysaccharide-binding protein (256 aa).

The first 21 residues, 1–21 (MMNTRALLPLSVLLMATLCLC), serve as a signal peptide directing secretion. The propeptide occupies 22-33 (ELPIPILQRFVR). Residue Asn-56 is glycosylated (N-linked (GlcNAc...) asparagine). Residues 146-256 (IICQQEGGHL…KLPFVCEVEL (111 aa)) enclose the C-type lectin domain. Disulfide bonds link Cys-148–Cys-252 and Cys-230–Cys-244.

As to expression, hemolymph.

It localises to the secreted. In terms of biological role, participates probably in the elimination of foreign substances invading the insect abdominal cavity, and in trapping intracellular symbionts, when they leak from the mycetomes into the hemolymph. The protein is Hemolymph lipopolysaccharide-binding protein of Periplaneta americana (American cockroach).